The following is a 629-amino-acid chain: Serine/threonine-protein kinase ICK (629 aa).

The Protein kinase domain maps to 4 to 284 (YTTIKQLGDG…ASQALRYPYF (281 aa)). Residues 10–18 (LGDGTYGSV) and Lys-33 contribute to the ATP site. Asp-125 (proton acceptor) is an active-site residue. The residue at position 157 (Thr-157) is a Phosphothreonine. Residue Tyr-159 is modified to Phosphotyrosine. Position 161 is a phosphoserine (Ser-161). Disordered stretches follow at residues 292–322 (ISTQDSGKPQKDVQDKTGPPPYVKPAPPAQA), 454–482 (PSEPVGTGTSVSTQASSQRRDTPTLQSTA), and 579–629 (GYSS…PSRR). The segment covering 309–321 (GPPPYVKPAPPAQ) has biased composition (pro residues). A compositionally biased stretch (polar residues) spans 460–482 (TGTSVSTQASSQRRDTPTLQSTA).

It belongs to the protein kinase superfamily. CMGC Ser/Thr protein kinase family. CDC2/CDKX subfamily. Mg(2+) is required as a cofactor. Post-translationally, autophosphorylated on serine and threonine residues. Phosphorylation at Thr-157 increases kinase activity. As to expression, expressed in embryonic heart from day 11. Highly expressed in the uterus and at lower levels in brain, heart, lung, kidney, skeletal muscle, ovary and liver in adult tissues.

It is found in the cytoplasm. The protein localises to the cell projection. It localises to the cilium. Its subcellular location is the nucleus. The protein resides in the cytoskeleton. It is found in the cilium basal body. The catalysed reaction is L-seryl-[protein] + ATP = O-phospho-L-seryl-[protein] + ADP + H(+). It carries out the reaction L-threonyl-[protein] + ATP = O-phospho-L-threonyl-[protein] + ADP + H(+). Its function is as follows. Required for ciliogenesis, particularly in neuronal and retinal progenitor cells. Phosphorylates KIF3A. Involved in the control of ciliary length. Regulates the ciliary localization of SHH pathway components as well as the localization of IFT components at ciliary tips. May play a role in cardiac development. Regulates intraflagellar transport (IFT) speed and negatively regulates cilium length in a cAMP and mTORC1 signaling-dependent manner and this regulation requires its kinase activity. This is Serine/threonine-protein kinase ICK (Cilk1) from Rattus norvegicus (Rat).